The primary structure comprises 311 residues: Probable manganese-dependent inorganic pyrophosphatase (311 aa).

His-9, Asp-13, Asp-15, Asp-77, His-99, and Asp-151 together coordinate Mn(2+).

It belongs to the PPase class C family. As to quaternary structure, homodimer. The cofactor is Mn(2+).

Its subcellular location is the cytoplasm. It carries out the reaction diphosphate + H2O = 2 phosphate + H(+). The protein is Probable manganese-dependent inorganic pyrophosphatase (ppaC) of Streptococcus gordonii (strain Challis / ATCC 35105 / BCRC 15272 / CH1 / DL1 / V288).